The chain runs to 388 residues: Omega-hydroxy-beta-dihydromenaquinone-9 sulfotransferase Stf3 (388 aa).

The protein belongs to the Stf3 family.

The enzyme catalyses omega-hydroxy-beta-dihydromenaquinone-9 + 3'-phosphoadenylyl sulfate = omega-sulfo-beta-dihydromenaquinone-9 + adenosine 3',5'-bisphosphate + H(+). Its function is as follows. Involved in the biosynthesis of sulfomenaquinone (SMK, initially named S881 on the basis of its mass), which is localized in the outer envelope of M.bovis and negatively regulates its virulence. Catalyzes the transfer of a sulfonate group from 3'-phosphoadenosine-5'-phosphosulfate (PAPS) to omega-hydroxy-beta-dihydromenaquinone-9, generating omega-sulfo-beta-dihydromenaquinone-9 (sulfomenaquinone). The polypeptide is Omega-hydroxy-beta-dihydromenaquinone-9 sulfotransferase Stf3 (Mycobacterium bovis (strain ATCC BAA-935 / AF2122/97)).